The primary structure comprises 356 residues: MAGLKLQAVTKSWDGKTQVIQPLTLDVADGEFIVMVGPSGCGKSTLLRMVAGLERVTSGDIWIDRKRVTEMEPKDRGIAMVFQNYALYPHMSVEENMAWGLKIRGMSKAHIEERVREAARILELDGLLKRRPRELSGGQRQRVAMGRAIVREPAVFLFDEPLSNLDAKLRVQMRLELQHLHRRLRTTSLYVTHDQVEAMTLAQRVMVMNKGVAEQIGTPVEVYEKPASRFVASFIGSPAMNLLDGVISASGDRFELPGGLALPIGADYRGHAGRNMTLGIRPEHIALSSQAEGGVPLTVDTLEILGADNLAHGRWGDQKLVVRLAHQQRPAAGSTLWLHLPEHQRHLFDGETGQRV.

The ABC transporter domain maps to Leu-4–Ile-235. Residue Gly-37 to Ser-44 participates in ATP binding.

It belongs to the ABC transporter superfamily. sn-glycerol-3-phosphate importer (TC 3.A.1.1.3) family. As to quaternary structure, the complex is composed of two ATP-binding proteins (UgpC), two transmembrane proteins (UgpA and UgpE) and a solute-binding protein (UgpB).

It localises to the cell inner membrane. The enzyme catalyses sn-glycerol 3-phosphate(out) + ATP + H2O = sn-glycerol 3-phosphate(in) + ADP + phosphate + H(+). Part of the ABC transporter complex UgpBAEC involved in sn-glycerol-3-phosphate (G3P) import. Responsible for energy coupling to the transport system. The sequence is that of sn-glycerol-3-phosphate import ATP-binding protein UgpC from Salmonella typhimurium (strain LT2 / SGSC1412 / ATCC 700720).